Consider the following 227-residue polypeptide: MMNHKFVLLILLIFYCFFLSGCNNSKKTPCSRKHSHKELSKDDPHNLVYKGYYKVGSQYKIKGKTYKPNAPKSFTETGYASWYGGGGDKFHGKKTANGDMFNKNLLTAAHKTLPLPCLVKVTNKTNNKSVILMVNDRGPFKPNRIIDVSAKAAEVLAFKKQGLAKVKIEYLHAETEKFLKNIKVNKSSNKTLAKSSKKPSSTKVANNKCSINCHIKLVNLKYKLAVN.

Residues 1-21 (MMNHKFVLLILLIFYCFFLSG) form the signal peptide. Cys22 carries N-palmitoyl cysteine lipidation. Cys22 carries the S-diacylglycerol cysteine lipid modification.

The protein belongs to the RlpA family.

It localises to the cell membrane. Functionally, lytic transglycosylase with a strong preference for naked glycan strands that lack stem peptides. The protein is Endolytic peptidoglycan transglycosylase RlpA of Rickettsia bellii (strain RML369-C).